Here is a 211-residue protein sequence, read N- to C-terminus: Protein-L-isoaspartate O-methyltransferase (211 aa).

The active site involves Ser-62.

Belongs to the methyltransferase superfamily. L-isoaspartyl/D-aspartyl protein methyltransferase family.

Its subcellular location is the cytoplasm. The enzyme catalyses [protein]-L-isoaspartate + S-adenosyl-L-methionine = [protein]-L-isoaspartate alpha-methyl ester + S-adenosyl-L-homocysteine. In terms of biological role, catalyzes the methyl esterification of L-isoaspartyl residues in peptides and proteins that result from spontaneous decomposition of normal L-aspartyl and L-asparaginyl residues. It plays a role in the repair and/or degradation of damaged proteins. The sequence is that of Protein-L-isoaspartate O-methyltransferase from Shewanella baltica (strain OS195).